Reading from the N-terminus, the 539-residue chain is Chaperonin GroEL (539 aa).

Residues 29 to 32 (TLGP), 86 to 90 (DGTTT), Gly-413, 477 to 479 (NAA), and Asp-493 contribute to the ATP site.

This sequence belongs to the chaperonin (HSP60) family. As to quaternary structure, forms a cylinder of 14 subunits composed of two heptameric rings stacked back-to-back. Interacts with the co-chaperonin GroES.

It is found in the cytoplasm. The catalysed reaction is ATP + H2O + a folded polypeptide = ADP + phosphate + an unfolded polypeptide.. Functionally, together with its co-chaperonin GroES, plays an essential role in assisting protein folding. The GroEL-GroES system forms a nano-cage that allows encapsulation of the non-native substrate proteins and provides a physical environment optimized to promote and accelerate protein folding. This is Chaperonin GroEL from Leifsonia xyli subsp. xyli (strain CTCB07).